A 169-amino-acid chain; its full sequence is Macro domain-containing protein SCO6450 (169 aa).

Residues 1 to 169 form the Macro domain; sequence MTGITLVQGD…AYEAFAARLG (169 aa).

It belongs to the MacroD-type family.

The sequence is that of Macro domain-containing protein SCO6450 from Streptomyces coelicolor (strain ATCC BAA-471 / A3(2) / M145).